The sequence spans 983 residues: 3',5'-cyclic-AMP phosphodiesterase, isoforms N/G (983 aa).

Disordered regions lie at residues 31–333, 349–370, 400–429, and 528–566; these read MPEG…SAGL, SDSD…ASES, VPAS…LSQG, and SAGQ…RLPT. The segment covering 35 to 50 has biased composition (basic and acidic residues); the sequence is GEDHRGDLNQKGENNN. Residues 51 to 60 are compositionally biased toward polar residues; sequence RPRPSISLAN. Residues 84–97 are compositionally biased toward gly residues; that stretch reads SVGGGDSDGGGEAI. Composition is skewed to low complexity over residues 112–121 and 145–167; these read LSTTTSNSSS and QLQQ…SQRS. The segment covering 174–199 has biased composition (acidic residues); it reads AEGEEFDVDPMDEDDEDQTYDRETEE. 2 stretches are compositionally biased toward low complexity: residues 219–234 and 248–261; these read SSLF…TTSS and AASI…SDLM. Polar residues-rich tracts occupy residues 268–287, 358–368, and 401–419; these read STAT…SQRR, KSMSRNSSIAS, and PASN…SRSG. Residues 569–898 enclose the PDEase domain; it reads VETPRENELG…DYYQSMIPPS (330 aa). Catalysis depends on His645, which acts as the Proton donor. 645-649 provides a ligand contact to 3',5'-cyclic AMP; that stretch reads HNSLH. A divalent metal cation-binding residues include His649, His685, Asp686, and Asp803. The 3',5'-cyclic AMP site is built by Asp686, Asp803, and Gln854. A compositionally biased stretch (acidic residues) spans 920 to 937; the sequence is EESDQENLAELEEGDESG. The tract at residues 920 to 983 is disordered; that stretch reads EESDQENLAE…CQNQPQHGGM (64 aa). The segment covering 938–955 has biased composition (low complexity); that stretch reads GESTTTGTTGTTAASALS. The segment covering 956–967 has biased composition (gly residues); sequence GAGGGGGGGGGM. The segment covering 973-983 has biased composition (polar residues); the sequence is GCQNQPQHGGM.

Belongs to the cyclic nucleotide phosphodiesterase family. PDE4 subfamily. In terms of assembly, monomer. The cofactor is a divalent metal cation.

The enzyme catalyses 3',5'-cyclic AMP + H2O = AMP + H(+). It participates in purine metabolism; 3',5'-cyclic AMP degradation; AMP from 3',5'-cyclic AMP: step 1/1. Functionally, hydrolyzes the second messenger cAMP, which is a key regulator of many important physiological processes. Vital for female fertility. Required for learning/memory. The polypeptide is 3',5'-cyclic-AMP phosphodiesterase, isoforms N/G (Drosophila melanogaster (Fruit fly)).